A 139-amino-acid chain; its full sequence is Trafficking protein particle complex subunit 2-like protein (139 aa).

Belongs to the TRAPP small subunits family. Sedlin subfamily. Component of the multisubunit TRAPP (transport protein particle) complex, which includes at least TRAPPC2, TRAPPC2L, TRAPPC3, TRAPPC3L, TRAPPC4, TRAPPC5, TRAPPC8, TRAPPC9, TRAPPC10, TRAPPC11 and TRAPPC12. Interacts with the heterodimer TRAPPC3-TRAPPC6A.

It localises to the cytoplasm. Its subcellular location is the perinuclear region. It is found in the endoplasmic reticulum. The protein resides in the golgi apparatus. In terms of biological role, may play a role in vesicular transport from endoplasmic reticulum to Golgi. This chain is Trafficking protein particle complex subunit 2-like protein (Trappc2l), found in Rattus norvegicus (Rat).